Reading from the N-terminus, the 318-residue chain is NADH-ubiquinone oxidoreductase chain 1 (318 aa).

8 helical membrane passes run Leu3–Val23, Met70–Pro90, Leu100–Gly120, Leu146–Ile166, Tyr171–Ala191, Leu222–Phe242, Leu254–Ile273, and Leu294–Ile314.

This sequence belongs to the complex I subunit 1 family.

The protein localises to the mitochondrion inner membrane. It carries out the reaction a ubiquinone + NADH + 5 H(+)(in) = a ubiquinol + NAD(+) + 4 H(+)(out). In terms of biological role, core subunit of the mitochondrial membrane respiratory chain NADH dehydrogenase (Complex I) that is believed to belong to the minimal assembly required for catalysis. Complex I functions in the transfer of electrons from NADH to the respiratory chain. The immediate electron acceptor for the enzyme is believed to be ubiquinone. This is NADH-ubiquinone oxidoreductase chain 1 (MT-ND1) from Phyllostomus elongatus (Lesser spear-nosed bat).